Reading from the N-terminus, the 156-residue chain is Ribosomal RNA large subunit methyltransferase H (156 aa).

S-adenosyl-L-methionine-binding positions include Leu73, Gly104, and 123-128; that span reads LSSLTL.

It belongs to the RNA methyltransferase RlmH family. In terms of assembly, homodimer.

The protein resides in the cytoplasm. It carries out the reaction pseudouridine(1915) in 23S rRNA + S-adenosyl-L-methionine = N(3)-methylpseudouridine(1915) in 23S rRNA + S-adenosyl-L-homocysteine + H(+). Its function is as follows. Specifically methylates the pseudouridine at position 1915 (m3Psi1915) in 23S rRNA. This chain is Ribosomal RNA large subunit methyltransferase H, found in Ralstonia nicotianae (strain ATCC BAA-1114 / GMI1000) (Ralstonia solanacearum).